A 99-amino-acid chain; its full sequence is uncharacterized protein (99 aa).

It belongs to the ycf15 family.

The protein resides in the plastid. The protein localises to the chloroplast. This is an uncharacterized protein from Saccharum hybrid (Sugarcane).